We begin with the raw amino-acid sequence, 360 residues long: Phospho-N-acetylmuramoyl-pentapeptide-transferase (360 aa).

10 helical membrane passes run 27–47 (IVSL…LIAW), 72–92 (PTMG…MWAY), 94–114 (SNPY…VGFI), 132–152 (WKYF…YSIG), 168–188 (IMPQ…VGTS), 199–219 (GLAI…AWAT), 236–256 (AGEL…FLWF), 263–283 (VFMG…IAVL), 288–308 (FLLV…ILQV), and 338–358 (VIVR…ATLK).

It belongs to the glycosyltransferase 4 family. MraY subfamily. Mg(2+) is required as a cofactor.

It localises to the cell inner membrane. It carries out the reaction UDP-N-acetyl-alpha-D-muramoyl-L-alanyl-gamma-D-glutamyl-meso-2,6-diaminopimeloyl-D-alanyl-D-alanine + di-trans,octa-cis-undecaprenyl phosphate = di-trans,octa-cis-undecaprenyl diphospho-N-acetyl-alpha-D-muramoyl-L-alanyl-D-glutamyl-meso-2,6-diaminopimeloyl-D-alanyl-D-alanine + UMP. It participates in cell wall biogenesis; peptidoglycan biosynthesis. In terms of biological role, catalyzes the initial step of the lipid cycle reactions in the biosynthesis of the cell wall peptidoglycan: transfers peptidoglycan precursor phospho-MurNAc-pentapeptide from UDP-MurNAc-pentapeptide onto the lipid carrier undecaprenyl phosphate, yielding undecaprenyl-pyrophosphoryl-MurNAc-pentapeptide, known as lipid I. This Yersinia pestis bv. Antiqua (strain Angola) protein is Phospho-N-acetylmuramoyl-pentapeptide-transferase.